The primary structure comprises 696 residues: DNA-directed RNA polymerase subunit beta' (696 aa).

Zn(2+) is bound by residues cysteine 69, cysteine 71, cysteine 87, and cysteine 90. 3 residues coordinate Mg(2+): aspartate 504, aspartate 506, and aspartate 508.

It belongs to the RNA polymerase beta' chain family. RpoC1 subfamily. In terms of assembly, in plastids the minimal PEP RNA polymerase catalytic core is composed of four subunits: alpha, beta, beta', and beta''. When a (nuclear-encoded) sigma factor is associated with the core the holoenzyme is formed, which can initiate transcription. Mg(2+) is required as a cofactor. It depends on Zn(2+) as a cofactor.

It is found in the plastid. The protein localises to the chloroplast. The enzyme catalyses RNA(n) + a ribonucleoside 5'-triphosphate = RNA(n+1) + diphosphate. Functionally, DNA-dependent RNA polymerase catalyzes the transcription of DNA into RNA using the four ribonucleoside triphosphates as substrates. In Pinus thunbergii (Japanese black pine), this protein is DNA-directed RNA polymerase subunit beta'.